The primary structure comprises 794 residues: 6-hydroxypseudooxynicotine dehydrogenase complex subunit gamma (794 aa).

Heterohexamer of 2 alpha (kdhA), 2 beta (kdhB) and 2 gamma (kdhC) subunit. Dimer of heterotrimers. It depends on Mo-molybdopterin cytosine dinucleotide as a cofactor.

It catalyses the reaction 6-hydroxypseudooxynicotine + A + H2O = 2,6-dihydroxypseudooxynicotine + AH2. Its pathway is alkaloid degradation; nicotine degradation. Functionally, molybdo-flavoprotein enzyme complex involved in nicotine degradation. The subunit gamma (large subunit) contains the substrate-binding sites, the subunit alpha (medium subunit) binds FAD and the subunit beta (small subunit) has a 2Fe-2S ferredoxin-type domain which binds 2 2Fe-2S clusters. This Paenarthrobacter nicotinovorans (Arthrobacter nicotinovorans) protein is 6-hydroxypseudooxynicotine dehydrogenase complex subunit gamma (kdhC).